Here is a 380-residue protein sequence, read N- to C-terminus: Queuine tRNA-ribosyltransferase (380 aa).

D96 acts as the Proton acceptor in catalysis. Residues D96–F100, D150, Q193, and G220 contribute to the substrate site. Residues G251–S257 form an RNA binding region. The active-site Nucleophile is the D270. The RNA binding; important for wobble base 34 recognition stretch occupies residues T275–R279. C308, C310, C313, and H339 together coordinate Zn(2+).

Belongs to the queuine tRNA-ribosyltransferase family. As to quaternary structure, homodimer. Within each dimer, one monomer is responsible for RNA recognition and catalysis, while the other monomer binds to the replacement base PreQ1. It depends on Zn(2+) as a cofactor.

It catalyses the reaction 7-aminomethyl-7-carbaguanine + guanosine(34) in tRNA = 7-aminomethyl-7-carbaguanosine(34) in tRNA + guanine. It participates in tRNA modification; tRNA-queuosine biosynthesis. Functionally, catalyzes the base-exchange of a guanine (G) residue with the queuine precursor 7-aminomethyl-7-deazaguanine (PreQ1) at position 34 (anticodon wobble position) in tRNAs with GU(N) anticodons (tRNA-Asp, -Asn, -His and -Tyr). Catalysis occurs through a double-displacement mechanism. The nucleophile active site attacks the C1' of nucleotide 34 to detach the guanine base from the RNA, forming a covalent enzyme-RNA intermediate. The proton acceptor active site deprotonates the incoming PreQ1, allowing a nucleophilic attack on the C1' of the ribose to form the product. After dissociation, two additional enzymatic reactions on the tRNA convert PreQ1 to queuine (Q), resulting in the hypermodified nucleoside queuosine (7-(((4,5-cis-dihydroxy-2-cyclopenten-1-yl)amino)methyl)-7-deazaguanosine). In Streptococcus uberis (strain ATCC BAA-854 / 0140J), this protein is Queuine tRNA-ribosyltransferase.